The chain runs to 287 residues: Ribosomal RNA small subunit methyltransferase A (287 aa).

Asparagine 18, leucine 20, glycine 45, glutamate 66, aspartate 91, and asparagine 118 together coordinate S-adenosyl-L-methionine.

This sequence belongs to the class I-like SAM-binding methyltransferase superfamily. rRNA adenine N(6)-methyltransferase family. RsmA subfamily.

It is found in the cytoplasm. The catalysed reaction is adenosine(1518)/adenosine(1519) in 16S rRNA + 4 S-adenosyl-L-methionine = N(6)-dimethyladenosine(1518)/N(6)-dimethyladenosine(1519) in 16S rRNA + 4 S-adenosyl-L-homocysteine + 4 H(+). Functionally, specifically dimethylates two adjacent adenosines (A1518 and A1519) in the loop of a conserved hairpin near the 3'-end of 16S rRNA in the 30S particle. May play a critical role in biogenesis of 30S subunits. The polypeptide is Ribosomal RNA small subunit methyltransferase A (Haemophilus influenzae (strain PittEE)).